A 436-amino-acid chain; its full sequence is Phosphomethylpyrimidine synthase (436 aa).

Substrate contacts are provided by residues Asn69, Met98, Tyr127, His163, 185-187 (SRG), 226-229 (DACR), and Glu265. Zn(2+) is bound at residue His269. Position 292 (Tyr292) interacts with substrate. A Zn(2+)-binding site is contributed by His333. [4Fe-4S] cluster-binding residues include Cys409, Cys412, and Cys416.

The protein belongs to the ThiC family. The cofactor is [4Fe-4S] cluster.

It catalyses the reaction 5-amino-1-(5-phospho-beta-D-ribosyl)imidazole + S-adenosyl-L-methionine = 4-amino-2-methyl-5-(phosphooxymethyl)pyrimidine + CO + 5'-deoxyadenosine + formate + L-methionine + 3 H(+). Its pathway is cofactor biosynthesis; thiamine diphosphate biosynthesis. Functionally, catalyzes the synthesis of the hydroxymethylpyrimidine phosphate (HMP-P) moiety of thiamine from aminoimidazole ribotide (AIR) in a radical S-adenosyl-L-methionine (SAM)-dependent reaction. In Clostridium perfringens (strain ATCC 13124 / DSM 756 / JCM 1290 / NCIMB 6125 / NCTC 8237 / Type A), this protein is Phosphomethylpyrimidine synthase.